Here is a 461-residue protein sequence, read N- to C-terminus: Fumarate hydratase class II (461 aa).

Residues 98-100 (SGT), 129-132 (HPND), 139-141 (SSN), and T187 contribute to the substrate site. Catalysis depends on H188, which acts as the Proton donor/acceptor. The active site involves S318. Substrate contacts are provided by residues S319 and 324–326 (KVN).

This sequence belongs to the class-II fumarase/aspartase family. Fumarase subfamily. Homotetramer.

The protein localises to the cytoplasm. It catalyses the reaction (S)-malate = fumarate + H2O. The protein operates within carbohydrate metabolism; tricarboxylic acid cycle; (S)-malate from fumarate: step 1/1. Functionally, involved in the TCA cycle. Catalyzes the stereospecific interconversion of fumarate to L-malate. This Rickettsia prowazekii (strain Madrid E) protein is Fumarate hydratase class II.